A 1412-amino-acid polypeptide reads, in one-letter code: Ecdysone-induced protein 75B, isoform B (1412 aa).

Low complexity predominate over residues 1-14 (MEAVQAAAAATSSG). 4 disordered regions span residues 1-96 (MEAV…PGGT), 110-204 (QRAT…QQHV), 258-298 (QYQQ…VPPP), and 321-448 (HFQQ…SIPD). Residues 15-25 (GSSGSVPGSGS) show a composition bias toward gly residues. Over residues 32–57 (IKTEPIDFEMLHLEENERQQDIEREP) the composition is skewed to basic and acidic residues. Low complexity predominate over residues 58 to 68 (SSSNSNSNSNS). Polar residues predominate over residues 69–81 (LTPQRYTHVQVQT). Residues 87 to 96 (PTGLTTPGGT) are compositionally biased toward low complexity. The span at 124–133 (YSQQQGTAAS) shows a compositional bias: polar residues. Low complexity predominate over residues 135 to 150 (SAPPETTALLTTTSGT). Residues 151–164 (PQIIITRTLPSNQH) show a composition bias toward polar residues. A compositionally biased stretch (low complexity) spans 177 to 203 (HHYQQQQPQRQQSPPPLHHQQQQQQQH). Positions 266–284 (PLAPPPPPPPPPPPPPPPQ) are enriched in pro residues. Low complexity-rich tracts occupy residues 323–371 (QQQQ…SSHI), 378–403 (SSSS…NSVM), and 417–447 (ASSS…SSIP). Positions 455-531 (TVLCRVCGDK…VGMSRDAVRF (77 aa)) form a DNA-binding region, nuclear receptor. 2 consecutive NR C4-type zinc fingers follow at residues 458-478 (CRVC…CEGC) and 495-514 (CTKN…CQYC). In terms of domain architecture, NR LBD spans 565 to 813 (DQPRLLAAVL…QQMWSMEDGN (249 aa)). Disordered stretches follow at residues 837–878 (KSPL…SALA), 984–1021 (LDSP…SVDD), 1044–1064 (VSVS…KRQI), 1108–1174 (AEAD…SSHS), 1204–1317 (ENST…SNSA), and 1368–1401 (VTVT…NPGL). 5 stretches are compositionally biased toward low complexity: residues 854 to 866 (GSPS…GVSL), 1005 to 1017 (SSGG…SPRS), 1044 to 1058 (VSVS…STSS), 1110 to 1155 (ADAS…AQSQ), and 1163 to 1174 (SSPKASMASSHS). Polar residues-rich tracts occupy residues 1206–1219 (STAA…VGNR) and 1231–1253 (AVQN…QRQQ). Low complexity-rich tracts occupy residues 1254-1290 (SVSP…SASS), 1299-1317 (STSN…SNSA), and 1372-1400 (ASNG…PNPG).

It belongs to the nuclear hormone receptor family. NR1 subfamily.

The protein resides in the nucleus. In terms of biological role, implicated in the regulation of ecdysone-triggered gene hierarchies. Probably plays a key role in mediating the regulation of the larval molt by 20-OH-ecdysone. The chain is Ecdysone-induced protein 75B, isoform B (Eip75B) from Drosophila melanogaster (Fruit fly).